The primary structure comprises 288 residues: Bifunctional protein FolD (288 aa).

Residue 166–168 (GRS) coordinates NADP(+).

This sequence belongs to the tetrahydrofolate dehydrogenase/cyclohydrolase family. Homodimer.

It carries out the reaction (6R)-5,10-methylene-5,6,7,8-tetrahydrofolate + NADP(+) = (6R)-5,10-methenyltetrahydrofolate + NADPH. The catalysed reaction is (6R)-5,10-methenyltetrahydrofolate + H2O = (6R)-10-formyltetrahydrofolate + H(+). Its pathway is one-carbon metabolism; tetrahydrofolate interconversion. In terms of biological role, catalyzes the oxidation of 5,10-methylenetetrahydrofolate to 5,10-methenyltetrahydrofolate and then the hydrolysis of 5,10-methenyltetrahydrofolate to 10-formyltetrahydrofolate. In Levilactobacillus brevis (strain ATCC 367 / BCRC 12310 / CIP 105137 / JCM 1170 / LMG 11437 / NCIMB 947 / NCTC 947) (Lactobacillus brevis), this protein is Bifunctional protein FolD.